The sequence spans 325 residues: Methionyl-tRNA formyltransferase (325 aa).

Residue Ser111 to Pro114 coordinates (6S)-5,6,7,8-tetrahydrofolate.

The protein belongs to the Fmt family.

The enzyme catalyses L-methionyl-tRNA(fMet) + (6R)-10-formyltetrahydrofolate = N-formyl-L-methionyl-tRNA(fMet) + (6S)-5,6,7,8-tetrahydrofolate + H(+). Its function is as follows. Attaches a formyl group to the free amino group of methionyl-tRNA(fMet). The formyl group appears to play a dual role in the initiator identity of N-formylmethionyl-tRNA by promoting its recognition by IF2 and preventing the misappropriation of this tRNA by the elongation apparatus. This chain is Methionyl-tRNA formyltransferase, found in Microcystis aeruginosa (strain NIES-843 / IAM M-2473).